A 580-amino-acid chain; its full sequence is Viral transcription factor IE2 (580 aa).

Positions 1–11 (MESSAKRKMDP) are enriched in basic and acidic residues. Disordered stretches follow at residues 1–30 (MESS…TPVT) and 99–161 (DSSS…VIIK). Residues 99 to 133 (DSSSTGPTLTTHSCSVSSAPLNKPTPTSVAVTNTP) show a composition bias toward polar residues. Glycyl lysine isopeptide (Lys-Gly) (interchain with G-Cter in SUMO) cross-links involve residues K175 and K180. The SUMO-interacting motif 1/SIM1 signature appears at 199 to 202 (CIVI). Phosphoserine; by host CK2 is present on residues S203 and S205. The segment at 206–335 (EEEQGEEVET…KSKRISELDN (130 aa)) is disordered. Composition is skewed to low complexity over residues 216 to 236 (RGAT…TSPT), 259 to 271 (SSSS…SASD), and 302 to 317 (AASS…SSGG). Residues 410-413 (IQII) carry the SUMO-interacting motif 1/SIM2 motif. The SUMO-interacting motif 1/SIM3 signature appears at 501 to 504 (VDLL).

The protein belongs to the HHV-5 IE2 protein family. As to quaternary structure, interacts with host SUMO-modified form of TATA-binding protein (TBP)-associated factor 12/TAF12 in a SIM-dependent manner; this interaction increases the transactivation activity of IE2. Interacts with host CHAF1A. Interacts with several components of the host transcriptional machinery including TBP, TF2B and CREB1. Interacts with host DNA replication licensing factor MCM3. Interacts with host PLSCR1; this interaction inhibits IE2 transactivating activity. Post-translationally, phosphorylated by host CK2 at Ser-203 and Ser-205; leading to enhanced SUMOylation. In terms of processing, SUMOylated; SUMOylation is enhanced when IE2 is phosphorylated by host CK2. The sumoylation is necessary for efficient replication of the virus and thus for the function of this viral transcription factor.

It localises to the host nucleus. Functionally, stimulates viral early and late gene expression and thus play a crucial role in the regulation of productive infection. Selectively drives host RNA Pol II transcription initiation at a subset of viral early-late and late promoters without substantially affecting Pol II transcription of expressed host genes. Mechanistically, forms a repressive complex at the major immediate-early promoter region involving direct association with host nucleosomes and TBP. Concerning activation, stimulates transcription by binding nearby, but not within, core promoter regions. In addition, activates quiescent cells to reenter the cell cycle and up-regulates several E2F-responsive genes, which are responsible for pushing the cell into S phase. In S-phase, inhibits cellular DNA synthesis and blocks further cell cycle progression. This Human cytomegalovirus (strain AD169) (HHV-5) protein is Viral transcription factor IE2 (UL122).